The following is a 178-amino-acid chain: Heavy metal-associated isoprenylated plant protein 30 (178 aa).

The region spanning 45–108 (LQTIDLKVRM…AVRRAGKRAE (64 aa)) is the HMA domain. Residues C56 and C59 each contribute to the a metal cation site. Residue C175 is modified to Cysteine methyl ester. C175 carries the S-farnesyl cysteine lipid modification. A propeptide spans 176–178 (SLM) (removed in mature form).

Belongs to the HIPP family. As to quaternary structure, interacts with ZHD3/HB21, ZHD11/HB29 and ZHD8/HB30.

In terms of biological role, heavy-metal-binding protein. This chain is Heavy metal-associated isoprenylated plant protein 30, found in Arabidopsis thaliana (Mouse-ear cress).